The chain runs to 346 residues: Protein SHI RELATED SEQUENCE 5 (346 aa).

Residues 7–31 (LGGRDNNSNNNKQDHHQVDKDHHHQ) are disordered. Positions 18–31 (KQDHHQVDKDHHHQ) are enriched in basic and acidic residues. Zn(2+) contacts are provided by Cys-125, Cys-128, Cys-136, Cys-141, Cys-145, and Cys-152. Residues 125 to 152 (CQDCGNQAKKDCPHMRCRTCCKSRGFHC) constitute a DNA-binding region (zn(2)-C6 fungal-type; degenerate). The segment covering 175 to 186 (SLQHHSASSRET) has biased composition (polar residues). Positions 175 to 215 (SLQHHSASSRETQNAKRLREASGGDNNDDKDHSGGGGSALA) are disordered. Positions 187–207 (QNAKRLREASGGDNNDDKDHS) are enriched in basic and acidic residues. Positions 269–272 (IGGH) match the Required for homo- and heterodimerization motif.

It belongs to the SHI protein family.

The protein resides in the nucleus. Its function is as follows. Transcription activator that binds DNA on 5'-ACTCTAC-3' and promotes auxin homeostasis-regulating gene expression (e.g. YUC genes), as well as genes affecting stamen development, cell expansion and timing of flowering. Synergistically with other SHI-related proteins, regulates gynoecium, stamen and leaf development in a dose-dependent manner, controlling apical-basal patterning. Promotes style and stigma formation, and influences vascular development during gynoecium development. May also have a role in the formation and/or maintenance of the shoot apical meristem (SAM). This Arabidopsis thaliana (Mouse-ear cress) protein is Protein SHI RELATED SEQUENCE 5 (SRS5).